We begin with the raw amino-acid sequence, 470 residues long: ATP synthase subunit beta 2 (470 aa).

Residue 155–162 (GGAGVGKT) coordinates ATP.

The protein belongs to the ATPase alpha/beta chains family. F-type ATPases have 2 components, CF(1) - the catalytic core - and CF(0) - the membrane proton channel. CF(1) has five subunits: alpha(3), beta(3), gamma(1), delta(1), epsilon(1). CF(0) has three main subunits: a(1), b(2) and c(9-12). The alpha and beta chains form an alternating ring which encloses part of the gamma chain. CF(1) is attached to CF(0) by a central stalk formed by the gamma and epsilon chains, while a peripheral stalk is formed by the delta and b chains.

It is found in the cell inner membrane. It carries out the reaction ATP + H2O + 4 H(+)(in) = ADP + phosphate + 5 H(+)(out). Produces ATP from ADP in the presence of a proton gradient across the membrane. The catalytic sites are hosted primarily by the beta subunits. This is ATP synthase subunit beta 2 from Nitrosospira multiformis (strain ATCC 25196 / NCIMB 11849 / C 71).